A 153-amino-acid polypeptide reads, in one-letter code: Ribosome maturation factor RimP (153 aa).

This sequence belongs to the RimP family.

The protein localises to the cytoplasm. Functionally, required for maturation of 30S ribosomal subunits. This Rippkaea orientalis (strain PCC 8801 / RF-1) (Cyanothece sp. (strain PCC 8801)) protein is Ribosome maturation factor RimP.